Here is a 98-residue protein sequence, read N- to C-terminus: NADH-ubiquinone oxidoreductase chain 4L (98 aa).

3 helical membrane passes run 1-21 (MSLV…GLLM), 29-49 (SLLC…LIIL), and 61-81 (IILL…LVMV).

Belongs to the complex I subunit 4L family. In terms of assembly, core subunit of respiratory chain NADH dehydrogenase (Complex I) which is composed of 45 different subunits.

It is found in the mitochondrion inner membrane. It catalyses the reaction a ubiquinone + NADH + 5 H(+)(in) = a ubiquinol + NAD(+) + 4 H(+)(out). Its function is as follows. Core subunit of the mitochondrial membrane respiratory chain NADH dehydrogenase (Complex I) which catalyzes electron transfer from NADH through the respiratory chain, using ubiquinone as an electron acceptor. Part of the enzyme membrane arm which is embedded in the lipid bilayer and involved in proton translocation. This Hippopotamus amphibius (Hippopotamus) protein is NADH-ubiquinone oxidoreductase chain 4L (MT-ND4L).